A 101-amino-acid chain; its full sequence is MLHTAFISNILANYLGAMSVILPNILTVTGDIKYIGAGLASVGILGTGVGQGLIGQGACLAIGRNPEMASKVTSTMIVSAGISESGAIYSLVIAILLIFVV.

A run of 2 helical transmembrane segments spans residues 35-55 and 81-101; these read IGAG…GLIG and GISE…IFVV.

It belongs to the ATPase C chain family. F-type ATPases have 2 components, F(1) - the catalytic core - and F(0) - the membrane proton channel. F(1) has five subunits: alpha(3), beta(3), gamma(1), delta(1), epsilon(1). F(0) has three main subunits: a(1), b(2) and c(10-14). The alpha and beta chains form an alternating ring which encloses part of the gamma chain. F(1) is attached to F(0) by a central stalk formed by the gamma and epsilon chains, while a peripheral stalk is formed by the delta and b chains.

It is found in the cell membrane. Its function is as follows. F(1)F(0) ATP synthase produces ATP from ADP in the presence of a proton or sodium gradient. F-type ATPases consist of two structural domains, F(1) containing the extramembraneous catalytic core and F(0) containing the membrane proton channel, linked together by a central stalk and a peripheral stalk. During catalysis, ATP synthesis in the catalytic domain of F(1) is coupled via a rotary mechanism of the central stalk subunits to proton translocation. Key component of the F(0) channel; it plays a direct role in translocation across the membrane. A homomeric c-ring of between 10-14 subunits forms the central stalk rotor element with the F(1) delta and epsilon subunits. The chain is ATP synthase subunit c from Mycoplasma capricolum subsp. capricolum (strain California kid / ATCC 27343 / NCTC 10154).